Consider the following 253-residue polypeptide: Probable transcriptional regulatory protein RAF_ORF0717 (253 aa).

Residues 1–21 are disordered; the sequence is MAGHSKFKNIQHRKGAQDKKR.

It belongs to the TACO1 family.

The protein localises to the cytoplasm. In Rickettsia africae (strain ESF-5), this protein is Probable transcriptional regulatory protein RAF_ORF0717.